The chain runs to 563 residues: Grainyhead-like protein 1 homolog (563 aa).

Residues 194 to 428 form the Grh/CP2 DB domain; the sequence is NNLGFQYVLE…ELDKPAALFI (235 aa). 2 interaction with DNA regions span residues 326–335 and 372–375; these read TDFSTQKGVK and RKLR. Positions 377 to 405 are disordered; the sequence is EDKRAQKRKVQEYTAGALPGGRKKSDGEY.

The protein belongs to the grh/CP2 family. Grainyhead subfamily.

The protein resides in the nucleus. Its function is as follows. Probable transcription factor. Binds a motif with the core sequence 5'-C[ACT][TG]G-3' in regulatory elements of target genes. Many putative target genes show oscillating expression levels, perhaps as a result of rhythmic variation in accumulation of grh-1. Plays a role in proper cuticle formation and/or barrier function and is required repetitively during development, for successful completion of each molt. Involved in modulating lifespan. Plays a role in defense response to bacteria. May act upstream of the p38 MAP kinase / pmk-1 pathway. May act downstream of the insulin/IGF-1 receptor signaling (IIS) pathway. This Caenorhabditis elegans protein is Grainyhead-like protein 1 homolog.